Consider the following 426-residue polypeptide: D-tagatose-1,6-bisphosphate aldolase subunit KbaZ (426 aa).

This sequence belongs to the GatZ/KbaZ family. KbaZ subfamily. As to quaternary structure, forms a complex with KbaY.

The protein operates within carbohydrate metabolism; D-tagatose 6-phosphate degradation; D-glyceraldehyde 3-phosphate and glycerone phosphate from D-tagatose 6-phosphate: step 2/2. Its function is as follows. Component of the tagatose-1,6-bisphosphate aldolase KbaYZ that is required for full activity and stability of the Y subunit. Could have a chaperone-like function for the proper and stable folding of KbaY. When expressed alone, KbaZ does not show any aldolase activity. The polypeptide is D-tagatose-1,6-bisphosphate aldolase subunit KbaZ (Escherichia coli O139:H28 (strain E24377A / ETEC)).